The chain runs to 251 residues: MPDAVVFSPGGYRYIPAVFQYSAGIAAEPGFEIERVRFHRPVPLAEAFVAVESHLRAIGRPTTSFAQCELRSPDPFNDQGFIDFNTEYVKTLERWGIYKDRVNPVARTNVCPMYDKPTTPSMFAFSYTVPTTSAAKRPSFQLAGGGDARGGSAPYKDRIVAFGDTSPEGLREKVVFVIEEMESRLKTLGLGWADAVSTQLYTVQNIGHLVGPELARRGCGAGGLVWNYTRPPVIGLEYEMDVRGAVRETVL.

As to quaternary structure, monomer.

It carries out the reaction (2Z,4E)-2-aminomuconate + H2O = (2Z,4E)-2-hydroxyhexa-2,4-dienedioate + NH4(+). The protein operates within xenobiotic degradation; 4-chloronitrobenzene degradation. It functions in the pathway xenobiotic degradation; nitrobenzene degradation. With respect to regulation, cysteine residue modifying agents such as p-chloromercuribenzoate and the SH-binding metals Zn(2+), Ni(2+) and Cu(2+) completely inhibit deaminase activity, whereas Ca(2+), Mg(2+) and the histidine residue-modifying agent diethyl pyrocarbonate inhibit the activity by 23 to 50%. Involved in the biodegradation of xenobiotic compounds, such as nitrobenzene and 4-chloronitrobenzene (4-CNB). CnbZ preferentially catalyzes the deamination of 2-amino-5-chloromuconate (2A5CM) to yield 2-hydroxy-5-chloromuconate (2H5CM). Also able to catalyze the deamination of 2-aminomuconate to yield 2-hydroxymuconate, which spontaneously converts into its keto form, 2-oxalocrotonate. In Comamonas testosteroni (Pseudomonas testosteroni), this protein is 2-amino-5-chloromuconate deaminase.